Reading from the N-terminus, the 252-residue chain is 3-dehydroquinate dehydratase (252 aa).

3-dehydroquinate is bound by residues Ser21, 46–48, and Arg82; that span reads EWR. Catalysis depends on His143, which acts as the Proton donor/acceptor. The Schiff-base intermediate with substrate role is filled by Lys170. The 3-dehydroquinate site is built by Arg213, Ser232, and Gln236.

This sequence belongs to the type-I 3-dehydroquinase family. As to quaternary structure, homodimer.

The enzyme catalyses 3-dehydroquinate = 3-dehydroshikimate + H2O. Its pathway is metabolic intermediate biosynthesis; chorismate biosynthesis; chorismate from D-erythrose 4-phosphate and phosphoenolpyruvate: step 3/7. Its function is as follows. Involved in the third step of the chorismate pathway, which leads to the biosynthesis of aromatic amino acids. Catalyzes the cis-dehydration of 3-dehydroquinate (DHQ) and introduces the first double bond of the aromatic ring to yield 3-dehydroshikimate. The protein is 3-dehydroquinate dehydratase of Escherichia coli O9:H4 (strain HS).